A 32-amino-acid polypeptide reads, in one-letter code: YCQKWMWTCDEERKCCEGLVCRLWCKKKIEEG.

Intrachain disulfides connect cysteine 2–cysteine 16, cysteine 9–cysteine 21, and cysteine 15–cysteine 25.

Belongs to the neurotoxin 30 (phrixotoxin) family. As to expression, expressed by the venom gland.

It localises to the secreted. Its function is as follows. Binds the voltage-sensor domain of the potassium channel KvAP (from the archaeon Aeropyrum pernix) and affects channel gating. This is Kappa-theraphotoxin-Gr2b from Grammostola rosea (Chilean rose tarantula).